The primary structure comprises 625 residues: Inactive glucose-6-phosphate 1-dehydrogenase 4, chloroplastic (625 aa).

The N-terminal 49 residues, 1 to 49, are a transit peptide targeting the chloroplast; sequence MSLSSCLLPFSQSATAPSSSVCSCHLAASFSNFPVSSRDYSFSRSGSLV. NADP(+) contacts are provided by residues 160 to 167 and Arg-194; that span reads GATGELAR. An intrachain disulfide couples Cys-212 to Cys-220. Lys-297 provides a ligand contact to NADP(+). Residues Lys-297, 327-331, Glu-365, and Asp-382 contribute to the D-glucose 6-phosphate site; that span reads HMLGR. The Proton acceptor role is filled by His-387. The NADP(+) site is built by Arg-471, Arg-480, Arg-513, and Arg-606.

It belongs to the glucose-6-phosphate dehydrogenase family. As to quaternary structure, forms homodimer. Interacts with G6PD1. In terms of tissue distribution, expressed in leaves, stems and buds.

It is found in the plastid. Its subcellular location is the chloroplast stroma. Its function is as follows. Seems to be a catalytically inactive enzyme. The sequence is that of Inactive glucose-6-phosphate 1-dehydrogenase 4, chloroplastic from Arabidopsis thaliana (Mouse-ear cress).